Here is a 257-residue protein sequence, read N- to C-terminus: Thiazole synthase (257 aa).

Catalysis depends on K97, which acts as the Schiff-base intermediate with DXP. 1-deoxy-D-xylulose 5-phosphate is bound by residues G158, 184–185 (AG), and 206–207 (NT).

Belongs to the ThiG family. Homotetramer. Forms heterodimers with either ThiH or ThiS.

It localises to the cytoplasm. The enzyme catalyses [ThiS sulfur-carrier protein]-C-terminal-Gly-aminoethanethioate + 2-iminoacetate + 1-deoxy-D-xylulose 5-phosphate = [ThiS sulfur-carrier protein]-C-terminal Gly-Gly + 2-[(2R,5Z)-2-carboxy-4-methylthiazol-5(2H)-ylidene]ethyl phosphate + 2 H2O + H(+). It functions in the pathway cofactor biosynthesis; thiamine diphosphate biosynthesis. Its function is as follows. Catalyzes the rearrangement of 1-deoxy-D-xylulose 5-phosphate (DXP) to produce the thiazole phosphate moiety of thiamine. Sulfur is provided by the thiocarboxylate moiety of the carrier protein ThiS. In vitro, sulfur can be provided by H(2)S. This chain is Thiazole synthase, found in Desulforamulus reducens (strain ATCC BAA-1160 / DSM 100696 / MI-1) (Desulfotomaculum reducens).